Reading from the N-terminus, the 149-residue chain is Transcriptional repressor NrdR (149 aa).

The segment at 3–34 is a zinc-finger region; it reads CPFCNADDTKVIDSRLVADGHQVRRRRECLVC. The region spanning 49–139 is the ATP-cone domain; the sequence is PRVIKSNGVR…VYRSFEDIRE (91 aa).

This sequence belongs to the NrdR family. The cofactor is Zn(2+).

Negatively regulates transcription of bacterial ribonucleotide reductase nrd genes and operons by binding to NrdR-boxes. The sequence is that of Transcriptional repressor NrdR from Tolumonas auensis (strain DSM 9187 / NBRC 110442 / TA 4).